A 465-amino-acid chain; its full sequence is Cysteine--tRNA ligase (465 aa).

Cys27 is a binding site for Zn(2+). The short motif at 29–39 (PTVYDDAHLGH) is the 'HIGH' region element. The Zn(2+) site is built by Cys207, His237, and Glu241. A 'KMSKS' region motif is present at residues 269-273 (KMSKS). Lys272 is a binding site for ATP.

Belongs to the class-I aminoacyl-tRNA synthetase family. Monomer. Zn(2+) is required as a cofactor.

It localises to the cytoplasm. The catalysed reaction is tRNA(Cys) + L-cysteine + ATP = L-cysteinyl-tRNA(Cys) + AMP + diphosphate. This Helicobacter pylori (strain Shi470) protein is Cysteine--tRNA ligase.